A 157-amino-acid chain; its full sequence is MEQKKTRVTIVGSVYAQPGTQFVYMGRADQCESCTIARVCHNLESGRRYEVVAIRAASHRCPVHHGGAVTVDVAEAPVEMRVSPDIARKNTTIVVKFPECDEACETFAACHPIGVVEGQKYIITDVLEGEAAPCRTGPSPVLVRVVPLPEGLPRYTP.

The protein belongs to the UPF0179 family.

In Methanospirillum hungatei JF-1 (strain ATCC 27890 / DSM 864 / NBRC 100397 / JF-1), this protein is UPF0179 protein Mhun_1135.